A 251-amino-acid polypeptide reads, in one-letter code: Protection of telomeres homolog 2 (251 aa).

The disordered stretch occupies residues 221-251 (ELDNWPEGPPKTFAEAIARANNSRRPRDPPQ).

It belongs to the telombin family.

The protein localises to the nucleus. The protein resides in the chromosome. It localises to the telomere. Its function is as follows. Telomeric DNA-binding protein, which binds to two or more single-stranded G-rich repeat sequences (G-strand), with high specificity to the 5'-TTAGGC-3' sequence. In addition, repeat sequence binding requires a 3' single-stranded telomeric overhang. Acts redundantly with pot-1 to negatively regulate telomerase-mediated telomere extension. Also regulates telomere length by the telomerase-independent telomere maintenance pathway called ALT (alternative lengthening of telomeres). Does not appear to have a role in anchoring telomeres to the nuclear envelope. The protein is Protection of telomeres homolog 2 of Caenorhabditis elegans.